We begin with the raw amino-acid sequence, 432 residues long: Glutamyl-tRNA reductase (432 aa).

Substrate is bound by residues 55–58, serine 114, 119–121, and glutamine 125; these read TCNR and ETQ. Cysteine 56 functions as the Nucleophile in the catalytic mechanism. 194–199 serves as a coordination point for NADP(+); the sequence is GAGEMI.

It belongs to the glutamyl-tRNA reductase family. In terms of assembly, homodimer.

The enzyme catalyses (S)-4-amino-5-oxopentanoate + tRNA(Glu) + NADP(+) = L-glutamyl-tRNA(Glu) + NADPH + H(+). The protein operates within porphyrin-containing compound metabolism; protoporphyrin-IX biosynthesis; 5-aminolevulinate from L-glutamyl-tRNA(Glu): step 1/2. Functionally, catalyzes the NADPH-dependent reduction of glutamyl-tRNA(Glu) to glutamate 1-semialdehyde (GSA). The sequence is that of Glutamyl-tRNA reductase from Burkholderia thailandensis (strain ATCC 700388 / DSM 13276 / CCUG 48851 / CIP 106301 / E264).